The sequence spans 295 residues: Aquaporin-9 (295 aa).

Residues 1-24 are Cytoplasmic-facing; it reads MQPEGAEKGKSFKQRLVLKSSLAK. A helical membrane pass occupies residues 25–43; sequence ETLSEFLGTFILIVLGCGC. The Extracellular portion of the chain corresponds to 44 to 57; sequence VAQAILSRGRFGGV. A helical transmembrane segment spans residues 58–77; the sequence is ITINVGFSMAVAMAIYVAGG. Topologically, residues 78–79 are cytoplasmic; that stretch reads VS. The discontinuously helical intramembrane region spans 80–92; the sequence is GGHINPAVSLAMC. Residues 84 to 86 carry the NPA 1 motif; that stretch reads NPA. Over 93–98 the chain is Cytoplasmic; it reads LFGRMK. Residues 99–123 traverse the membrane as a helical segment; that stretch reads WFKLPFYVGAQFLGAFVGAATVFGI. The Extracellular portion of the chain corresponds to 124 to 160; it reads YYDGLMSFAGGKLLIVGENATAHIFATYPAPYLSLAN. The helical transmembrane segment at 161 to 178 threads the bilayer; sequence AFADQVVATMILLIIVFA. The Cytoplasmic segment spans residues 179–190; that stretch reads IFDSRNLGAPRG. A helical transmembrane segment spans residues 191–207; it reads LEPIAIGLLIIVIASSL. Topologically, residues 208–210 are extracellular; sequence GLN. Residues 211 to 225 constitute an intramembrane region (discontinuously helical); sequence SGCAMNPARDLSPRL. Positions 216 to 218 match the NPA 2 motif; the sequence is NPA. Topologically, residues 226 to 243 are extracellular; sequence FTALAGWGFEVFRAGNNF. A helical transmembrane segment spans residues 244–264; the sequence is WWIPVVGPLVGAVIGGLIYVL. At 265–295 the chain is on the cytoplasmic side; the sequence is VIEIHHPEPDSVFKTEQSEDKPEKYELSVIM.

It belongs to the MIP/aquaporin (TC 1.A.8) family. As to quaternary structure, homotetramer; each monomer provides an independent glycerol/water pore. As to expression, highly expressed in peripheral leukocytes. Also expressed in liver, lung, and spleen.

Its subcellular location is the cell membrane. It localises to the basolateral cell membrane. The catalysed reaction is glycerol(in) = glycerol(out). The enzyme catalyses H2O(in) = H2O(out). It catalyses the reaction urea(in) = urea(out). It carries out the reaction (S)-lactate(in) = (S)-lactate(out). The catalysed reaction is NH4(+)(in) = NH4(+)(out). The enzyme catalyses uracil(in) = uracil(out). It catalyses the reaction adenine(out) = adenine(in). It carries out the reaction 3-hydroxybutanoate(in) = 3-hydroxybutanoate(out). The catalysed reaction is D-sorbitol(in) = D-sorbitol(out). The enzyme catalyses D-mannitol(in) = D-mannitol(out). It catalyses the reaction H2O2(out) = H2O2(in). It carries out the reaction arsenite(in) = arsenite(out). The catalysed reaction is selenite(in) = selenite(out). Aquaglyceroporins form homotetrameric transmembrane channels, with each monomer independently mediating glycerol and water transport across the plasma membrane along their osmotic gradient. AQP9 is the primary route for glycerol uptake in hepatocytes, supporting hepatic gluconeogenesis. It exhibits broad specificity and may transport various small, non-charged solutes, including carbamides, polyols, purines, and pyrimidines. AQP9 may also facilitate hepatic urea extrusion. Due to its permeability to lactate, AQP9 might participate in the astrocyte-to-neuron lactate shuttle, supplying neurons with energy. Additionally, AQP9 is permeable to arsenite, contributing to arsenic excretion by the liver and providing partial protection against arsenic toxicity. It is also permeable to H2O2 in vivo. Could also be permeable to ammonium. The sequence is that of Aquaporin-9 from Homo sapiens (Human).